We begin with the raw amino-acid sequence, 1056 residues long: Ribosomal protein S6 kinase delta-1 (1056 aa).

Residues 8–132 (SADLARFYTV…DFFKGGVISD (125 aa)) form the PX domain. Residues 204–223 (VGAVASDSEPSRVEDRESRS) form a disordered region. A compositionally biased stretch (basic and acidic residues) spans 212 to 222 (EPSRVEDRESR). An MIT domain is found at 276 to 304 (VQGESSPTRREAVKRRTAEYLMRAESICS). Ser281, Ser422, Ser423, Ser426, Ser446, Ser448, and Ser454 each carry phosphoserine. The region spanning 343–444 (GVIDKVLLVM…SMPPRVCLQQ (102 aa)) is the Protein kinase 1 domain. Positions 426–504 (SLDIKEGRPS…KWLDSGSSSE (79 aa)) are disordered. The span at 443–454 (QQPSASPQGGSS) shows a compositional bias: low complexity. Positions 473 to 482 (TSLTPSSQDD) are enriched in polar residues. A phosphoserine mark is found at Ser493 and Ser527. The tract at residues 529–588 (SEESVMQPEGDKADTQAVSSPASLATGSVSPSTHLRVFSGGEDLEAVSSPPTSESLSRSK) is disordered. A compositionally biased stretch (polar residues) spans 544–561 (QAVSSPASLATGSVSPST). Residues 576–587 (SSPPTSESLSRS) show a composition bias toward low complexity. Phosphoserine occurs at positions 577, 599, 602, 634, 655, 658, 661, and 787. Positions 628-662 (TLEDGDSPSQSLDPGESKRESEAQDSVSRGSDDSV) are disordered. Residues 789-1046 (RSESDRLGQV…VEDIKSHPFF (258 aa)) form the Protein kinase 2 domain. ATP is bound by residues 795–803 (LGQVEVVVT) and Lys823. Residue Asp919 is the Proton acceptor of the active site.

Belongs to the protein kinase superfamily. Ser/Thr protein kinase family. S6 kinase subfamily. In terms of assembly, interacts with SPHK1 and phosphatidylinositol 3-phosphate. Interacts (via PX domain) with PRDX3.

It localises to the cytoplasm. Its subcellular location is the membrane. The protein resides in the early endosome. It carries out the reaction L-seryl-[protein] + ATP = O-phospho-L-seryl-[protein] + ADP + H(+). The catalysed reaction is L-threonyl-[protein] + ATP = O-phospho-L-threonyl-[protein] + ADP + H(+). In terms of biological role, may be involved in transmitting sphingosine-1 phosphate (SPP)-mediated signaling into the cell. Plays a role in the recruitment of PRDX3 to early endosomes. This is Ribosomal protein S6 kinase delta-1 (Rps6kc1) from Mus musculus (Mouse).